The following is a 443-amino-acid chain: Glutamate--tRNA ligase 2 (443 aa).

A 'HIGH' region motif is present at residues 7–17 (PSPTGYLHVGN). A 'KMSKS' region motif is present at residues 236–240 (KISKR). Residue lysine 239 participates in ATP binding.

It belongs to the class-I aminoacyl-tRNA synthetase family. Glutamate--tRNA ligase type 1 subfamily. Monomer.

The protein localises to the cytoplasm. It catalyses the reaction tRNA(Glu) + L-glutamate + ATP = L-glutamyl-tRNA(Glu) + AMP + diphosphate. In terms of biological role, catalyzes the attachment of glutamate to tRNA(Glu) in a two-step reaction: glutamate is first activated by ATP to form Glu-AMP and then transferred to the acceptor end of tRNA(Glu). This chain is Glutamate--tRNA ligase 2, found in Ehrlichia canis (strain Jake).